Consider the following 195-residue polypeptide: Ras-related protein Rab-31 (195 aa).

7 residues coordinate GTP: Gly16, Gly18, Lys19, Ser20, Ser21, Asp32, and His33. Ser20 contributes to the Mg(2+) binding site. 2 short sequence motifs (switch) span residues 30–42 (HFDH…IGAS) and 63–79 (AGQE…YRGS). The residue at position 36 (Ser36) is a Phosphoserine. GTP-binding residues include Thr38, Gly64, Asn119, Asp122, Ala150, and Lys151. Position 38 (Thr38) interacts with Mg(2+). The disordered stretch occupies residues 168 to 195 (PPLGPQENGNSGGIKLGNQSLQASRRCC). Residues 184 to 195 (GNQSLQASRRCC) show a composition bias toward polar residues. S-geranylgeranyl cysteine attachment occurs at residues Cys194 and Cys195.

Belongs to the small GTPase superfamily. Rab family. Interacts with OCRL. Interacts (in GDP-bound form) with RIN3 and GAPVD1, which function as guanine exchange factors (GEF). Interacts with EGFR. Interacts with NGFR. Interacts (in GTP-bound form) with EEA1. Interacts (in GTP-bound form) with APPL2; interaction contributes to or enhances recruitment of APPL2 to the phagosomes; interaction enhances Fc-gamma receptor-mediated phagocytosis through PI3K/Akt signaling in macrophages. Mg(2+) serves as cofactor. As to expression, detected in brain astrocytes (at protein level).

The protein localises to the early endosome. It localises to the golgi apparatus. Its subcellular location is the trans-Golgi network. It is found in the trans-Golgi network membrane. The protein resides in the cytoplasmic vesicle. The protein localises to the phagosome. It localises to the phagosome membrane. It carries out the reaction GTP + H2O = GDP + phosphate + H(+). With respect to regulation, regulated by guanine nucleotide exchange factors (GEFs) including RIN3 and GAPVD1 which promote the exchange of bound GDP for free GTP. Regulated by GTPase activating proteins (GAPs) which increase the GTP hydrolysis activity. Inhibited by GDP dissociation inhibitors (GDIs) which prevent Rab-GDP dissociation. Functionally, the small GTPases Rab are key regulators of intracellular membrane trafficking, from the formation of transport vesicles to their fusion with membranes. Rabs cycle between an inactive GDP-bound form and an active GTP-bound form that is able to recruit to membranes different set of downstream effectors directly responsible for vesicle formation, movement, tethering and fusion. Required for the integrity and for normal function of the Golgi apparatus and the trans-Golgi network. Plays a role in insulin-stimulated translocation of GLUT4 to the cell membrane. Plays a role in the maturation of phagosomes that engulf pathogens, such as S.aureus and Mycobacterium. Plays a role in M6PR transport from the trans-Golgi network to endosomes. Plays a role in the internalization of EGFR from the cell membrane into endosomes. The polypeptide is Ras-related protein Rab-31 (Mus musculus (Mouse)).